The sequence spans 457 residues: Na(+)/H(+) antiporter NhaA (457 aa).

Transmembrane regions (helical) follow at residues 33 to 53 (ASGIVLLSCAVAALALANSPL), 76 to 96 (FSLAMLVNDGLMTIFFFVVGM), 114 to 134 (LLPLVAALGGMAVPAAIFLAF), 142 to 162 (AGWGVPMATDIAFCVGVLTLL), 172 to 192 (VFVTALAIFDDIGGILVIALF), 196 to 216 (GLQLTWLAAAGGLTAALALMS), 235 to 255 (YALHHGGIHATIAGVIAGLAI), 308 to 328 (FVHALHPWVAFAIMPVFALAN), 349 to 369 (TALALFAGKLVGIFCCTWIAV), 385 to 405 (LIGVSAVAGIGFTVALFIAGL), and 419 to 439 (VGILAGSLVSGVVGALVLRLT).

It belongs to the NhaA Na(+)/H(+) (TC 2.A.33) antiporter family.

Its subcellular location is the cell inner membrane. It catalyses the reaction Na(+)(in) + 2 H(+)(out) = Na(+)(out) + 2 H(+)(in). Its function is as follows. Na(+)/H(+) antiporter that extrudes sodium in exchange for external protons. This is Na(+)/H(+) antiporter NhaA from Anaeromyxobacter sp. (strain Fw109-5).